A 364-amino-acid chain; its full sequence is Homeobox protein Nkx-2.3 (364 aa).

Positions 132-153 are disordered; the sequence is GDCKAAEESERPKPRSRRKPRV. A compositionally biased stretch (basic and acidic residues) spans 135-144; the sequence is KAAEESERPK. The segment at residues 148 to 207 is a DNA-binding region (homeobox); it reads RRKPRVLFSQAQVFELERRFKQQRYLSAPEREHLASSLKLTSTQVKIWFQNRRYKCKRQR.

This sequence belongs to the NK-2 homeobox family.

The protein localises to the nucleus. In terms of biological role, transcription factor. The chain is Homeobox protein Nkx-2.3 (NKX2-3) from Homo sapiens (Human).